Consider the following 398-residue polypeptide: Lysophosphatidylserine lipase ABHD12 (398 aa).

Residues 1–15 (MRKRTEPVTLEHERC) show a composition bias toward basic and acidic residues. The segment at 1-24 (MRKRTEPVTLEHERCAASGSSSSG) is disordered. The Cytoplasmic portion of the chain corresponds to 1 to 74 (MRKRTEPVTL…RKSLWFRLRK (74 aa)). The helical transmembrane segment at 75–95 (ILLCVLGFYIAIPFLVKLCPG) threads the bilayer. Residues 96–398 (IQAKLIFLNF…LGKSEPERQH (303 aa)) lie on the Extracellular side of the membrane. An N-linked (GlcNAc...) asparagine glycan is attached at asparagine 123. Serine 246 serves as the catalytic Nucleophile. Catalysis depends on charge relay system residues aspartate 333 and histidine 372.

This sequence belongs to the serine esterase family. Glycosylated.

It is found in the endoplasmic reticulum membrane. It localises to the mitochondrion. The catalysed reaction is 1-(9Z-octadecenoyl)-sn-glycero-3-phospho-L-serine + H2O = sn-glycero-3-phospho-L-serine + (9Z)-octadecenoate + H(+). It carries out the reaction 1-(9Z-octadecenoyl)-sn-glycero-3-phospho-(1'-sn-glycerol) + H2O = sn-glycero-3-phospho-(1'-sn-glycerol) + (9Z)-octadecenoate + H(+). It catalyses the reaction 1-(9Z-octadecenoyl)-sn-glycero-3-phospho-(1D-myo-inositol) + H2O = sn-glycero-3-phospho-1D-myo-inositol + (9Z)-octadecenoate + H(+). The enzyme catalyses 1-(9Z-octadecenoyl)-sn-glycero-3-phosphoethanolamine + H2O = sn-glycero-3-phosphoethanolamine + (9Z)-octadecenoate + H(+). The catalysed reaction is 1-(9Z-octadecenoyl)-sn-glycero-3-phosphocholine + H2O = 1-(9Z-octadecenoyl)-sn-glycerol + phosphocholine + H(+). It carries out the reaction 2-(9Z-octadecenoyl)-glycerol + H2O = glycerol + (9Z)-octadecenoate + H(+). It catalyses the reaction 1-hexadecanoyl-sn-glycero-3-phospho-L-serine + H2O = sn-glycero-3-phospho-L-serine + hexadecanoate + H(+). The enzyme catalyses 2-(5Z,8Z,11Z,14Z-eicosatetraenoyl)-glycerol + H2O = glycerol + (5Z,8Z,11Z,14Z)-eicosatetraenoate + H(+). The catalysed reaction is Hydrolyzes glycerol monoesters of long-chain fatty acids.. It carries out the reaction 1-decanoylglycerol + H2O = decanoate + glycerol + H(+). It catalyses the reaction 1-dodecanoylglycerol + H2O = dodecanoate + glycerol + H(+). The enzyme catalyses 1-tetradecanoylglycerol + H2O = tetradecanoate + glycerol + H(+). The catalysed reaction is 2-hexadecanoylglycerol + H2O = glycerol + hexadecanoate + H(+). It carries out the reaction 1-(9Z-octadecenoyl)-glycerol + H2O = glycerol + (9Z)-octadecenoate + H(+). It catalyses the reaction 2-(9Z,12Z-octadecadienoyl)-glycerol + H2O = (9Z,12Z)-octadecadienoate + glycerol + H(+). The enzyme catalyses 1-(5Z,8Z,11Z,14Z-eicosatetraenoyl)-glycerol + H2O = glycerol + (5Z,8Z,11Z,14Z)-eicosatetraenoate + H(+). The catalysed reaction is 1-(9Z,12Z-octadecadienoyl)-glycerol + H2O = (9Z,12Z)-octadecadienoate + glycerol + H(+). It carries out the reaction 1-hexadecanoylglycerol + H2O = glycerol + hexadecanoate + H(+). It catalyses the reaction 1-octadecanoylglycerol + H2O = octadecanoate + glycerol + H(+). The enzyme catalyses 1-octadecanoyl-2-(9,10-epoxyoctadecanoyl)-sn-glycero-3-phospho-L-serine + H2O = 9,10-epoxyoctadecanoate + 1-octadecanoyl-sn-glycero-3-phosphoserine + H(+). The catalysed reaction is 1-octadecanoyl-2-(10-hydroxyoctadecanoyl)-sn-glycero-3-phospho-L-serine + H2O = 1-octadecanoyl-sn-glycero-3-phosphoserine + 10-hydroxyoctadecanoate + H(+). It carries out the reaction 1-hexadecanoyl-2-(10-hydroxyoctadecanoyl)-sn-glycero-3-phospho-L-serine + H2O = 10-hydroxyoctadecanoate + 1-hexadecanoyl-sn-glycero-3-phospho-L-serine + H(+). Its activity is regulated as follows. Selectively inhibited by DO264 (N-3-pyridyl-N'-(1-[3-chloro-4-{2-chloro-4-(trifluoromethoxy)phenoxy}pyridine-2-yl]piperidin-4-yl)thiourea). Its function is as follows. Lysophosphatidylserine (LPS) lipase that mediates the hydrolysis of lysophosphatidylserine, a class of signaling lipids that regulates immunological and neurological processes. Represents a major lysophosphatidylserine lipase in the brain, thereby playing a key role in the central nervous system. Also able to hydrolyze oxidized phosphatidylserine; oxidized phosphatidylserine is produced in response to severe inflammatory stress and constitutes a proapoptotic 'eat me' signal. Also has monoacylglycerol (MAG) lipase activity: hydrolyzes 2-arachidonoylglycerol (2-AG), thereby acting as a regulator of endocannabinoid signaling pathways. Has a strong preference for very-long-chain lipid substrates; substrate specificity is likely due to improved catalysis and not improved substrate binding. This is Lysophosphatidylserine lipase ABHD12 from Mus musculus (Mouse).